Reading from the N-terminus, the 218-residue chain is Ribonuclease HII (218 aa).

Residues 23 to 216 (RFLCGVDEAG…VREAIARGLV (194 aa)) enclose the RNase H type-2 domain. A divalent metal cation-binding residues include D29, E30, and D125.

Belongs to the RNase HII family. The cofactor is Mn(2+). Mg(2+) is required as a cofactor.

It is found in the cytoplasm. It carries out the reaction Endonucleolytic cleavage to 5'-phosphomonoester.. Its function is as follows. Endonuclease that specifically degrades the RNA of RNA-DNA hybrids. The sequence is that of Ribonuclease HII from Cupriavidus pinatubonensis (strain JMP 134 / LMG 1197) (Cupriavidus necator (strain JMP 134)).